We begin with the raw amino-acid sequence, 615 residues long: Elongation factor 4 (615 aa).

The region spanning 14-200 (SRIRNFCIIA…KVVELIPAPS (187 aa)) is the tr-type G domain. GTP-binding positions include 26 to 31 (DHGKST) and 147 to 150 (NKID).

It belongs to the TRAFAC class translation factor GTPase superfamily. Classic translation factor GTPase family. LepA subfamily.

It is found in the cell membrane. It carries out the reaction GTP + H2O = GDP + phosphate + H(+). Required for accurate and efficient protein synthesis under certain stress conditions. May act as a fidelity factor of the translation reaction, by catalyzing a one-codon backward translocation of tRNAs on improperly translocated ribosomes. Back-translocation proceeds from a post-translocation (POST) complex to a pre-translocation (PRE) complex, thus giving elongation factor G a second chance to translocate the tRNAs correctly. Binds to ribosomes in a GTP-dependent manner. In Corynebacterium efficiens (strain DSM 44549 / YS-314 / AJ 12310 / JCM 11189 / NBRC 100395), this protein is Elongation factor 4.